The chain runs to 166 residues: Ribosome maturation factor RimM (166 aa).

Positions 94-165 (EGEYYLGKLI…TIELKVLDLL (72 aa)) constitute a PRC barrel domain.

Belongs to the RimM family. As to quaternary structure, binds ribosomal protein uS19.

The protein resides in the cytoplasm. An accessory protein needed during the final step in the assembly of 30S ribosomal subunit, possibly for assembly of the head region. Essential for efficient processing of 16S rRNA. May be needed both before and after RbfA during the maturation of 16S rRNA. It has affinity for free ribosomal 30S subunits but not for 70S ribosomes. The polypeptide is Ribosome maturation factor RimM (Borrelia garinii subsp. bavariensis (strain ATCC BAA-2496 / DSM 23469 / PBi) (Borreliella bavariensis)).